The following is an 857-amino-acid chain: MVRSFPSDGWSALPTRFGFWPENPTTAGVVSSRVFSARLPEVCRQVHDKQPFGMFKGENGMNYTFSTFLIEAILIIFFIKIVYVLLRPLRQPRIVCEIIGGMMIGPSMLGRNRNFNYYLFPPIANYICANIGLMGFFYFFFLTAAKTDVAEIFKAPRKHKYIAAVSVLVPIACVGSTGAALKHKMDIRLQKPSSIGGVTFALGFTSFPVIYTVLRDMNLLNSEIGKFAMSVTLLGDMVGVYVLVLFEAMAQADGGGGAYSVIWFLISAAIMAACLLLVVKRSFEWIVAKTPEGGLVNQNYIVNILMGVLVSCFLTDMFGMAIAVGPIWLGLVVPHGPPLGSTLAIRSETFVNEFLMPFSFALVGQKTNVNLISKETWPKQISPLIYMSIVGFVTKFVSSTGAALFFKVPTRDSLTLGLMMNLRGQIDILLYLHWIDKQMVGLPGYSVMVLYAIVVTGVTAPLISFLYDPTRPYRSSKRRTIQHTPQNTETGLVLAVTDHDTFSGLITFLDFAYPTKTSPFSVFAIQLVELEGRAQPLFIAHDKKREEEYEEEEEPAERMGSRRVDQVQSAFKLYQEKRSECVTMHAYTAHASKHNMYQNICELALTKKTAFILLPYQKERLQDAALTELRDSGMLSVNADVLAHTPCSVCIYYEKGRLKNAMVRSSMDPQHTTNSSHMRQEMYRFVVLFLGGADNREALHLADRMTENPFINLTVIRFLAHNHEGEDEREKKLDDGVVTWFWVKNESNARVSYKEVVVKNGAETLAAIQAMNVNDYDLWITGRREGINPKILEGLSTWSEDHQLGVIGDTVAGSVFASEGSVLVVQQQVRNQMGGDGFLNGKFDYKKLVSPWSHSHN.

The next 11 helical transmembrane spans lie at 65-85 (FSTF…VYVL), 93-110 (RIVC…SMLG), 122-142 (PIAN…FFFL), 161-181 (YIAA…GAAL), 194-214 (SIGG…YTVL), 227-247 (FAMS…VLFE), 259-279 (YSVI…LLVV), 313-333 (FLTD…GLVV), 385-405 (IYMS…AALF), 413-435 (SLTL…LHWI), and 447-467 (VMVL…SFLY). The residue at position 855 (serine 855) is a Phosphoserine.

It belongs to the monovalent cation:proton antiporter 2 (CPA2) transporter (TC 2.A.37) family. CHX (TC 2.A.37.4) subfamily. In terms of tissue distribution, specifically expressed in pollen.

It is found in the membrane. Its function is as follows. May operate as a cation/H(+) antiporter. The sequence is that of Cation/H(+) antiporter 25 (CHX25) from Arabidopsis thaliana (Mouse-ear cress).